Consider the following 967-residue polypeptide: Dolichyl-phosphooligosaccharide-protein glycotransferase 1 (967 aa).

Over 1–21 the chain is Cytoplasmic; it reads MVKTQIKEKKKDEKVTIPLPG. A helical membrane pass occupies residues 22-42; that stretch reads KIKTVLAFLVVLAFAAYGFYI. Over 43 to 112 the chain is Extracellular; it reads RHLTAGKYFS…ISIFGYNELE (70 aa). The short motif at 53 to 55 is the DXD motif 1 element; it reads DPD. Asp-55 provides a ligand contact to Mn(2+). Residues 113–133 form a helical membrane-spanning segment; that stretch reads AFLLWPPFVGFLSVIGVYLLG. At 134-135 the chain is on the cytoplasmic side; sequence RK. Residues 136-156 form a helical membrane-spanning segment; it reads VLNEWAGMWGAIILSVLTANF. The Extracellular portion of the chain corresponds to 157-165; sequence SRTFSGNAR. Mn(2+) contacts are provided by Arg-165 and Asp-167. Residues 165–167 carry the DXD motif 2 motif; it reads RGD. A helical transmembrane segment spans residues 166-186; it reads GDGPFMMLFTFSAVLMLYYLT. Residues 187–193 lie on the Cytoplasmic side of the membrane; sequence EENKNKK. Residues 194–214 form a helical membrane-spanning segment; it reads IIWGTLFVLLAGISTAAWNGS. A topological domain (extracellular) is located at residue Pro-215. Residues 216–236 traverse the membrane as a helical segment; sequence FGLMVLLGFASFQTIILFIFG. Over 237–247 the chain is Cytoplasmic; it reads KINELREFIKE. A helical membrane pass occupies residues 248-268; that stretch reads YYPAYLGILAISYLLTIPGIG. Position 269 (Lys-269) is a topological domain, extracellular. A helical membrane pass occupies residues 270–290; that stretch reads IGGFVRFAFEVFLGLVFLAIV. Residues 291–306 are Cytoplasmic-facing; sequence MLYGGKYLNYSDKKHR. A helical membrane pass occupies residues 307–327; that stretch reads FAVVAVIVIAGFAGAYIYVGP. The Extracellular segment spans residues 328–360; the sequence is KLFTLMGGAYQSTQVYETVQELAKTDWGDVKVY. The TIXE motif signature appears at 345–348; sequence TVQE. Residues 361 to 381 form a helical membrane-spanning segment; that stretch reads YGVEKPNGIVFFLGLVGAMIV. Topologically, residues 382 to 396 are cytoplasmic; the sequence is TARYLYKLFKDGRRP. Residues 397 to 417 form a helical membrane-spanning segment; the sequence is HEELFAITFYVMSIYLLWTAA. Position 418 (Arg-418) is a topological domain, extracellular. Arg-418 serves as a coordination point for a glycophospholipid. A helical transmembrane segment spans residues 419–439; that stretch reads FLFLASYAIALMSGVFAGYVL. Residues 440–453 lie on the Cytoplasmic side of the membrane; it reads ETVEKMKESIPIKA. The helical transmembrane segment at 454-474 threads the bilayer; it reads ALGGVIAIMLLLIPLTHGPLL. Residues 475–967 lie on the Extracellular side of the membrane; it reads AQSAKSMRTT…LEVSASAPHH (493 aa). The interval 511–513 is interacts with target acceptor peptide in protein substrate; the sequence is WWD. The short motif at 511 to 515 is the WWDYG motif element; sequence WWDYG. Tyr-516 contributes to the a glycophospholipid binding site. The DK motif signature appears at 571 to 578; the sequence is DWAKFNAI.

The protein belongs to the STT3 family. Requires Mn(2+) as cofactor. Mg(2+) is required as a cofactor.

It localises to the cell membrane. It carries out the reaction an archaeal dolichyl phosphooligosaccharide + [protein]-L-asparagine = an archaeal dolichyl phosphate + a glycoprotein with the oligosaccharide chain attached by N-beta-D-glycosyl linkage to a protein L-asparagine.. It participates in protein modification; protein glycosylation. In terms of biological role, oligosaccharyl transferase (OST) that catalyzes the initial transfer of a defined glycan (ManNAcXyl(2)GlcAMan(2)GalNAc in P.furiosus) from the lipid carrier dolichol-monophosphate to an asparagine residue within an Asn-X-Ser/Thr consensus motif in nascent polypeptide chains, the first step in protein N-glycosylation. The chain is Dolichyl-phosphooligosaccharide-protein glycotransferase 1 (aglB1) from Pyrococcus furiosus (strain ATCC 43587 / DSM 3638 / JCM 8422 / Vc1).